A 273-amino-acid polypeptide reads, in one-letter code: Rhamnulose-1-phosphate aldolase (273 aa).

Glu117 is an active-site residue. Zn(2+)-binding residues include His140, His142, and His211.

It belongs to the aldolase class II family. RhaD subfamily. Zn(2+) is required as a cofactor.

It is found in the cytoplasm. It carries out the reaction L-rhamnulose 1-phosphate = (S)-lactaldehyde + dihydroxyacetone phosphate. It participates in carbohydrate degradation; L-rhamnose degradation; glycerone phosphate from L-rhamnose: step 3/3. Its function is as follows. Catalyzes the reversible cleavage of L-rhamnulose-1-phosphate to dihydroxyacetone phosphate (DHAP) and L-lactaldehyde. The polypeptide is Rhamnulose-1-phosphate aldolase (Listeria monocytogenes serotype 4b (strain F2365)).